We begin with the raw amino-acid sequence, 119 residues long: Large ribosomal subunit protein bL20 (119 aa).

Belongs to the bacterial ribosomal protein bL20 family.

In terms of biological role, binds directly to 23S ribosomal RNA and is necessary for the in vitro assembly process of the 50S ribosomal subunit. It is not involved in the protein synthesizing functions of that subunit. This chain is Large ribosomal subunit protein bL20, found in Rhodopseudomonas palustris (strain BisA53).